We begin with the raw amino-acid sequence, 682 residues long: Elongation factor G (682 aa).

Positions 8-282 (QKFRNFGIMA…AVVDYLPSPV (275 aa)) constitute a tr-type G domain. Residues 17 to 24 (AHIDAGKT), 81 to 85 (DTPGH), and 135 to 138 (NKMD) each bind GTP.

Belongs to the TRAFAC class translation factor GTPase superfamily. Classic translation factor GTPase family. EF-G/EF-2 subfamily.

It is found in the cytoplasm. Functionally, catalyzes the GTP-dependent ribosomal translocation step during translation elongation. During this step, the ribosome changes from the pre-translocational (PRE) to the post-translocational (POST) state as the newly formed A-site-bound peptidyl-tRNA and P-site-bound deacylated tRNA move to the P and E sites, respectively. Catalyzes the coordinated movement of the two tRNA molecules, the mRNA and conformational changes in the ribosome. This is Elongation factor G from Malacoplasma penetrans (strain HF-2) (Mycoplasma penetrans).